Consider the following 308-residue polypeptide: Ribonuclease Z (308 aa).

His-62, His-64, Asp-66, His-67, His-140, Asp-211, and His-269 together coordinate Zn(2+). Asp-66 (proton acceptor) is an active-site residue.

It belongs to the RNase Z family. Homodimer. The cofactor is Zn(2+).

It carries out the reaction Endonucleolytic cleavage of RNA, removing extra 3' nucleotides from tRNA precursor, generating 3' termini of tRNAs. A 3'-hydroxy group is left at the tRNA terminus and a 5'-phosphoryl group is left at the trailer molecule.. Zinc phosphodiesterase, which displays some tRNA 3'-processing endonuclease activity. Probably involved in tRNA maturation, by removing a 3'-trailer from precursor tRNA. This chain is Ribonuclease Z, found in Treponema denticola (strain ATCC 35405 / DSM 14222 / CIP 103919 / JCM 8153 / KCTC 15104).